Consider the following 526-residue polypeptide: Outer capsid protein VP5 (526 aa).

The segment at 1–42 (MGKVIRSLNRFGKKVGNALTSNTAKKIYSTIGKAADEFLESE) is involved in membrane permeabilization.

It belongs to the orbivirus VP5 family.

It is found in the virion. Its function is as follows. VP5 protein is one of the two proteins (with VP2) which constitute the virus particle outer capsid. Acts as a membrane permeabilization protein that mediates release of viral particles from endosomal compartments into the cytoplasm. Permeabilization activity is probably negatively regulated by VP2 and is triggered by endosomal degradation of VP2 and exposure to low pH. In Bluetongue virus 1 (isolate South Africa) (BTV 1), this protein is Outer capsid protein VP5 (Segment-6).